An 842-amino-acid chain; its full sequence is Glycogen phosphorylase, muscle form (842 aa).

Ser2 is subject to N-acetylserine. Ser15 is modified (phosphoserine; by PHK; in form phosphorylase A). Residues Asp43 and Tyr76 each contribute to the AMP site. Residues Tyr204 and Tyr227 each carry the phosphotyrosine modification. Position 310–319 (310–319) interacts with AMP; it reads RRFKSSKFGS. A Phosphoserine modification is found at Ser430. Tyr473 is modified (phosphotyrosine). Ser514 carries the phosphoserine modification. Lys681 is subject to N6-(pyridoxal phosphate)lysine. Ser747 and Ser748 each carry phosphoserine.

Belongs to the glycogen phosphorylase family. Homodimer. Homotetramer; to form the enzymatically active phosphorylase A. It depends on pyridoxal 5'-phosphate as a cofactor. Post-translationally, phosphorylation of Ser-15 converts phosphorylase B (unphosphorylated) to phosphorylase A.

It catalyses the reaction [(1-&gt;4)-alpha-D-glucosyl](n) + phosphate = [(1-&gt;4)-alpha-D-glucosyl](n-1) + alpha-D-glucose 1-phosphate. With respect to regulation, allosterically regulated through the non-covalent binding of metabolites, being activated by AMP and inhibited by ATP, ADP, and glucose-6-phosphate. The activity is also controlled by post-translational modifications including phosphorylation. Allosteric enzyme that catalyzes the rate-limiting step in glycogen catabolism, the phosphorolytic cleavage of glycogen to produce glucose-1-phosphate, and plays a central role in maintaining cellular and organismal glucose homeostasis. The chain is Glycogen phosphorylase, muscle form from Mus musculus (Mouse).